We begin with the raw amino-acid sequence, 36 residues long: Phosphoglycerate kinase, chloroplastic (36 aa).

Residues A22, D23, and N25 each contribute to the (2R)-3-phosphoglycerate site.

This sequence belongs to the phosphoglycerate kinase family. In terms of assembly, monomer. The cofactor is Mg(2+).

It localises to the plastid. It is found in the chloroplast. The catalysed reaction is (2R)-3-phosphoglycerate + ATP = (2R)-3-phospho-glyceroyl phosphate + ADP. The protein operates within carbohydrate biosynthesis; Calvin cycle. The sequence is that of Phosphoglycerate kinase, chloroplastic from Scenedesmus fuscus (Green alga).